The following is a 292-amino-acid chain: Xanthine dehydrogenase FAD-binding subunit (292 aa).

In terms of domain architecture, FAD-binding PCMH-type spans 1-176; sequence MFDFASYHRA…VAFHFPPQPK (176 aa). FAD contacts are provided by residues 27–34, 109–113, Ile165, and Phe184; these read KLLAGGTD and ATYGG.

Heterotrimer of XdhA, XdhB and XdhC. The cofactor is FAD.

The enzyme catalyses xanthine + NAD(+) + H2O = urate + NADH + H(+). The catalysed reaction is hypoxanthine + NAD(+) + H2O = xanthine + NADH + H(+). Its pathway is purine metabolism; hypoxanthine degradation; urate from hypoxanthine: step 1/2. The protein operates within purine metabolism; hypoxanthine degradation; urate from hypoxanthine: step 2/2. Its function is as follows. Presumed to be a dehydrogenase, but possibly an oxidase. Participates in limited purine salvage (requires aspartate) but does not support aerobic growth on purines as the sole carbon source (purine catabolism). The polypeptide is Xanthine dehydrogenase FAD-binding subunit (xdhB) (Escherichia coli O157:H7).